A 313-amino-acid polypeptide reads, in one-letter code: Uracil-DNA glycosylase (313 aa).

Residues 35–68 (DEPMPKKCRRPAGPPKGFISTRGDTSPSSDNNHI) form a disordered region. Polar residues predominate over residues 56 to 68 (RGDTSPSSDNNHI). D153 serves as the catalytic Proton acceptor.

This sequence belongs to the uracil-DNA glycosylase (UDG) superfamily. UNG family.

The protein resides in the host nucleus. The catalysed reaction is Hydrolyzes single-stranded DNA or mismatched double-stranded DNA and polynucleotides, releasing free uracil.. Functionally, excises uracil residues from the DNA which can arise as a result of misincorporation of dUMP residues by DNA polymerase or deamination of cytosines. Therefore may reduce deleterious uracil incorporation into the viral genome, particularly in terminally differentiated cells which lack DNA repair enzymes. This Gallus gallus (Chicken) protein is Uracil-DNA glycosylase (MDV014).